A 557-amino-acid polypeptide reads, in one-letter code: Dihydroxy-acid dehydratase (557 aa).

Asp-78 is a Mg(2+) binding site. [2Fe-2S] cluster is bound at residue Cys-119. Mg(2+)-binding residues include Asp-120 and Lys-121. Lys-121 is subject to N6-carboxylysine. A [2Fe-2S] cluster-binding site is contributed by Cys-192. Glu-446 is a binding site for Mg(2+). Residue Ser-472 is the Proton acceptor of the active site.

Belongs to the IlvD/Edd family. As to quaternary structure, homodimer. It depends on [2Fe-2S] cluster as a cofactor. Mg(2+) is required as a cofactor.

The catalysed reaction is (2R)-2,3-dihydroxy-3-methylbutanoate = 3-methyl-2-oxobutanoate + H2O. It catalyses the reaction (2R,3R)-2,3-dihydroxy-3-methylpentanoate = (S)-3-methyl-2-oxopentanoate + H2O. It functions in the pathway amino-acid biosynthesis; L-isoleucine biosynthesis; L-isoleucine from 2-oxobutanoate: step 3/4. The protein operates within amino-acid biosynthesis; L-valine biosynthesis; L-valine from pyruvate: step 3/4. In terms of biological role, functions in the biosynthesis of branched-chain amino acids. Catalyzes the dehydration of (2R,3R)-2,3-dihydroxy-3-methylpentanoate (2,3-dihydroxy-3-methylvalerate) into 2-oxo-3-methylpentanoate (2-oxo-3-methylvalerate) and of (2R)-2,3-dihydroxy-3-methylbutanoate (2,3-dihydroxyisovalerate) into 2-oxo-3-methylbutanoate (2-oxoisovalerate), the penultimate precursor to L-isoleucine and L-valine, respectively. In Campylobacter fetus subsp. fetus (strain 82-40), this protein is Dihydroxy-acid dehydratase.